Consider the following 206-residue polypeptide: Small ribosomal subunit protein uS4 (206 aa).

The S4 RNA-binding domain maps to 96-156 (GRLDNVVYRM…EKAKKQSRVK (61 aa)).

The protein belongs to the universal ribosomal protein uS4 family. Part of the 30S ribosomal subunit. Contacts protein S5. The interaction surface between S4 and S5 is involved in control of translational fidelity.

Its function is as follows. One of the primary rRNA binding proteins, it binds directly to 16S rRNA where it nucleates assembly of the body of the 30S subunit. Functionally, with S5 and S12 plays an important role in translational accuracy. This is Small ribosomal subunit protein uS4 from Salmonella typhi.